The primary structure comprises 65 residues: Disintegrin CC5 (65 aa).

The Disintegrin domain maps to Met1–Ser65. Intrachain disulfides connect Cys7–Cys30, Cys21–Cys27, Cys26–Cys51, and Cys39–Cys58. A Cell attachment site motif is present at residues Arg43–Asp45.

The protein belongs to the disintegrin family. Dimeric disintegrin subfamily. As to quaternary structure, homodimer; disulfide-linked. As to expression, expressed by the venom gland.

The protein localises to the secreted. Functionally, binds and inhibits integrins alpha-IIb/beta-3 (ITGA2B/ITGB3), alpha-V/beta-3 (ITGAV/ITGB3) and alpha-5/beta-1 (ITGA5/ITGB1). The chain is Disintegrin CC5 from Cerastes cerastes (Horned desert viper).